A 425-amino-acid polypeptide reads, in one-letter code: Histidine--tRNA ligase 1 (425 aa).

The protein belongs to the class-II aminoacyl-tRNA synthetase family. Homodimer.

Its subcellular location is the cytoplasm. The enzyme catalyses tRNA(His) + L-histidine + ATP = L-histidyl-tRNA(His) + AMP + diphosphate + H(+). This Bacillus anthracis protein is Histidine--tRNA ligase 1.